The primary structure comprises 128 residues: Large ribosomal subunit protein uL22 (128 aa).

The protein belongs to the universal ribosomal protein uL22 family. As to quaternary structure, part of the 50S ribosomal subunit.

In terms of biological role, this protein binds specifically to 23S rRNA; its binding is stimulated by other ribosomal proteins, e.g. L4, L17, and L20. It is important during the early stages of 50S assembly. It makes multiple contacts with different domains of the 23S rRNA in the assembled 50S subunit and ribosome. Functionally, the globular domain of the protein is located near the polypeptide exit tunnel on the outside of the subunit, while an extended beta-hairpin is found that lines the wall of the exit tunnel in the center of the 70S ribosome. The chain is Large ribosomal subunit protein uL22 from Prochlorococcus marinus (strain MIT 9301).